A 421-amino-acid chain; its full sequence is MPALKIPLFKMKDMVLILCLLKMSSAVPAFPRQPGTPGVASLSLETMRQLGSLQGLNMLSQYSRFGFGKSFNSLWMHGLLPPHSSFQWMRPREHETQQYEYSLPVHPPPLPSQPSLQPQQPGQKPFLQPTVVTSIQNPVQKGVPQPPIYQGHPPLQQVEGPMVQQQVAPSEKPPEAELPGLDFADPQDPSMFPIARLISQGPVPQDKPSPLYPGMFYMSYGANQLNSPARLGILSSEEMAGGRGGPLAYGAMFPGFGGMRPNLGGMPPNSAKGGDFTLEFDSPAAGTKGPEKGEGGAEGSPVAEANTADPESPALFSEVASGVLGGLLANPKGKIPNLARGPAGRSRGPPGVTPADADPLMTPGLADAYETYGADETTTLGLQEEMTMDSTATPYSEHTSMPGNKAQQPQIKRDAWRFQEP.

An N-terminal signal peptide occupies residues 1 to 26 (MPALKIPLFKMKDMVLILCLLKMSSA). Hydroxyproline is present on proline 37. A Phosphoserine modification is found at serine 43. Disordered regions lie at residues 104 to 126 (PVHP…QKPF), 264 to 311 (GGMP…ADPE), and 333 to 421 (GKIP…FQEP). Serine 112 is a glycosylation site (O-linked (GalNAc...) serine). Positions 113–125 (QPSLQPQQPGQKP) are enriched in low complexity. A compositionally biased stretch (low complexity) spans 339-350 (ARGPAGRSRGPP). The span at 388-410 (MDSTATPYSEHTSMPGNKAQQPQ) shows a compositional bias: polar residues. A compositionally biased stretch (basic and acidic residues) spans 411–421 (IKRDAWRFQEP).

The protein belongs to the ameloblastin family. Ameloblast-specific. Located at the Tomes processes of secretory ameloblasts and in the sheath space between rod-interrod enamel.

It is found in the secreted. The protein localises to the extracellular space. It localises to the extracellular matrix. In terms of biological role, involved in the mineralization and structural organization of enamel. The polypeptide is Ameloblastin (AMBN) (Sus scrofa (Pig)).